A 501-amino-acid polypeptide reads, in one-letter code: MMAECDPTDGEPGNGSGDSTPETNFLSSEVPAVLFEKTRSAPSLGLSLNPGAAVRISDSTESVLTELEADGSGEEALLLPGPAGSLSPRAGKEKRTRRNMLSSSSDNLASPGNSSGEFNHFPEDPEFGEIIQRAEQAIENGVFPERISQGSSGSYFVKDPKGKIIGVFKPKSEEPYGHLNPKWTKYFHKVCCPCCFGRGCLIPNQGYLSEAAASLVDQKLGLWIVPKTKVVHLASETFHYNAIDRAKSRGKKYALEKVPKVGRRFHRVGLPPKVGSFQLFVEGYHEADFWLRKFEAEPLPENMRKQLQSQFERLVVLDYVIRNTDRGNDNWLIKYEKPGDGELTEKESEWTDPKDSAIKIAAIDNGLAFPFKHPDEWRAYPFHWAWLPQAKVAFSQETRDLVLSRISDMNFVQDLCEDLYEMFRTDKGFDKTMFEKQMSVMRGQILNLTQALKDGKSPIQLVQMPRVVVERSRSGGQGRVVQLGNAFTQTFHCKRPFFTSW.

2 disordered regions span residues 1-30 (MMAECDPTDGEPGNGSGDSTPETNFLSSEV) and 65-122 (TELE…NHFP). The segment covering 17–27 (GDSTPETNFLS) has biased composition (polar residues). Residues 76-88 (ALLLPGPAGSLSP) are compositionally biased toward low complexity. The segment covering 99–117 (NMLSSSSDNLASPGNSSGE) has biased composition (polar residues). In terms of domain architecture, PI3K/PI4K catalytic spans 141–471 (GVFPERISQG…VQMPRVVVER (331 aa)). The interval 147–153 (ISQGSSG) is G-loop. ATP is bound by residues Ser-154 and Lys-169. The important for substrate binding stretch occupies residues 174–176 (EPY). The segment at 182-195 (KWTKYFHKVCCPCC) is important for interaction with membranes. ATP-binding positions include 278–281 (QLFV) and 292–293 (RK). The tract at residues 285–293 (HEADFWLRK) is important for interaction with membranes. A catalytic loop region spans residues 322-330 (RNTDRGNDN). An activation loop region spans residues 362–382 (AIDNGLAFPFKHPDEWRAYPF). Asp-364 is an ATP binding site. Residues 377–386 (WRAYPFHWAW) form an important for interaction with membranes region.

This sequence belongs to the PI3/PI4-kinase family. Type II PI4K subfamily.

Its subcellular location is the cytoplasm. It is found in the cytosol. The protein resides in the golgi apparatus membrane. It localises to the endoplasmic reticulum membrane. The protein localises to the cell membrane. Its subcellular location is the early endosome membrane. The catalysed reaction is a 1,2-diacyl-sn-glycero-3-phospho-(1D-myo-inositol) + ATP = a 1,2-diacyl-sn-glycero-3-phospho-(1D-myo-inositol 4-phosphate) + ADP + H(+). Functionally, contributes to the overall PI4-kinase activity of the cell. This contribution may be especially significant in plasma membrane, endosomal and Golgi compartments. The phosphorylation of phosphatidylinositol (PI) to PI4P is the first committed step in the generation of phosphatidylinositol 4,5-bisphosphate (PIP2), a precursor of the second messenger inositol 1,4,5-trisphosphate (InsP3). In Danio rerio (Zebrafish), this protein is Phosphatidylinositol 4-kinase type 2-beta (pi4k2b).